The following is a 342-amino-acid chain: Succinylglutamate desuccinylase (342 aa).

Zn(2+) is bound by residues H64, E67, and H159. Residue E222 is part of the active site.

This sequence belongs to the AspA/AstE family. Succinylglutamate desuccinylase subfamily. Requires Zn(2+) as cofactor.

The enzyme catalyses N-succinyl-L-glutamate + H2O = L-glutamate + succinate. It functions in the pathway amino-acid degradation; L-arginine degradation via AST pathway; L-glutamate and succinate from L-arginine: step 5/5. Functionally, transforms N(2)-succinylglutamate into succinate and glutamate. In Burkholderia orbicola (strain AU 1054), this protein is Succinylglutamate desuccinylase.